The primary structure comprises 90 residues: Barrier-to-autointegration factor (90 aa).

Phosphoserine is present on residues serine 2 and serine 3. Threonine 4 is modified (phosphothreonine). Serine 5 carries the phosphoserine modification.

It belongs to the BAF family. Homodimer.

It is found in the nucleus. The protein resides in the chromosome. Its subcellular location is the nucleus envelope. The protein localises to the cytoplasm. Non-specific DNA-binding protein that plays key roles in mitotic nuclear reassembly, chromatin organization, DNA damage response, gene expression and intrinsic immunity against foreign DNA. Contains two non-specific double-stranded DNA (dsDNA)-binding sites which promote DNA cross-bridging. Plays a key role in nuclear membrane reformation at the end of mitosis by driving formation of a single nucleus in a spindle-independent manner. Transiently cross-bridges anaphase chromosomes via its ability to bridge distant DNA sites, leading to the formation of a dense chromatin network at the chromosome ensemble surface that limits membranes to the surface. Also acts as a negative regulator of innate immune activation by restricting CGAS activity toward self-DNA upon acute loss of nuclear membrane integrity. Outcompetes CGAS for DNA-binding, thereby preventing CGAS activation and subsequent damaging autoinflammatory responses. Also involved in DNA damage response; acts by inhibiting the ADP-ribosyltransferase activity of PARP1. Involved in the recognition of exogenous dsDNA in the cytosol: associates with exogenous dsDNA immediately after its appearance in the cytosol at endosome breakdown and is required to avoid autophagy. The chain is Barrier-to-autointegration factor (banf1) from Danio rerio (Zebrafish).